The following is a 274-amino-acid chain: NH(3)-dependent NAD(+) synthetase (274 aa).

Residue 46-53 (GISGGQDS) participates in ATP binding. D52 contacts Mg(2+). Position 140 (R140) interacts with deamido-NAD(+). Position 160 (T160) interacts with ATP. E165 serves as a coordination point for Mg(2+). The deamido-NAD(+) site is built by K173 and D180. ATP is bound by residues K189 and T211. 260–261 (HK) contributes to the deamido-NAD(+) binding site.

The protein belongs to the NAD synthetase family. In terms of assembly, homodimer.

It carries out the reaction deamido-NAD(+) + NH4(+) + ATP = AMP + diphosphate + NAD(+) + H(+). It functions in the pathway cofactor biosynthesis; NAD(+) biosynthesis; NAD(+) from deamido-NAD(+) (ammonia route): step 1/1. In terms of biological role, catalyzes the ATP-dependent amidation of deamido-NAD to form NAD. Uses ammonia as a nitrogen source. The sequence is that of NH(3)-dependent NAD(+) synthetase from Nocardia farcinica (strain IFM 10152).